A 210-amino-acid chain; its full sequence is Large ribosomal subunit protein uL4 (210 aa).

It belongs to the universal ribosomal protein uL4 family. Part of the 50S ribosomal subunit.

Its function is as follows. One of the primary rRNA binding proteins, this protein initially binds near the 5'-end of the 23S rRNA. It is important during the early stages of 50S assembly. It makes multiple contacts with different domains of the 23S rRNA in the assembled 50S subunit and ribosome. Forms part of the polypeptide exit tunnel. This chain is Large ribosomal subunit protein uL4, found in Orientia tsutsugamushi (strain Boryong) (Rickettsia tsutsugamushi).